The sequence spans 187 residues: Protein canopy-1 (187 aa).

The first 24 residues, 1–24, serve as a signal peptide directing secretion; it reads MSPWIKHICLVLVAAFMLVKTTES. Residues 28–181 enclose the Saposin B-type domain; it reads EALYCSACMA…EVSDHCKSSV (154 aa). Intrachain disulfides connect Cys-32/Cys-177, Cys-35/Cys-170, and Cys-90/Cys-143. The short motif at 184–187 is the Prevents secretion from ER element; the sequence is HSEL.

It belongs to the canopy family. In terms of assembly, homodimer. Interacts with fgfr1.

The protein localises to the endoplasmic reticulum. Functionally, involved in the maintenance of the midbrain-hindbrain boundary (MHB) organizer. Contributes to a positive-feedback loop of FGF signaling in the MHB, enabling the MHB to exert its role as an organizer for the tectal and cerebellar development. The polypeptide is Protein canopy-1 (cnpy1) (Danio rerio (Zebrafish)).